We begin with the raw amino-acid sequence, 319 residues long: Epoxyqueuosine reductase (319 aa).

Asp-128 (proton donor) is an active-site residue. One can recognise a 4Fe-4S ferredoxin-type domain in the interval 173–202 (EANDPHPNYCGTCTRCLSACPTAALVEPAV). Residues Cys-182, Cys-185, Cys-188, Cys-192, Cys-208, Cys-236, Cys-239, and Cys-243 each contribute to the [4Fe-4S] cluster site.

The protein belongs to the QueG family. In terms of assembly, monomer. Cob(II)alamin serves as cofactor. The cofactor is [4Fe-4S] cluster.

It localises to the cytoplasm. The enzyme catalyses epoxyqueuosine(34) in tRNA + AH2 = queuosine(34) in tRNA + A + H2O. It functions in the pathway tRNA modification; tRNA-queuosine biosynthesis. Functionally, catalyzes the conversion of epoxyqueuosine (oQ) to queuosine (Q), which is a hypermodified base found in the wobble positions of tRNA(Asp), tRNA(Asn), tRNA(His) and tRNA(Tyr). This chain is Epoxyqueuosine reductase, found in Gloeobacter violaceus (strain ATCC 29082 / PCC 7421).